A 450-amino-acid chain; its full sequence is Akuammiline synthase 2 (450 aa).

Catalysis depends on H154, which acts as the Proton acceptor. The short motif at 218 to 225 (MRRFVFDA) is the Nuclear localization signal element. D376 functions as the Proton acceptor in the catalytic mechanism.

The protein belongs to the plant acyltransferase family. In terms of assembly, monomer.

It is found in the cytoplasm. The protein localises to the nucleus. It carries out the reaction rhazimol + acetyl-CoA = akuammiline + CoA + H(+). Its pathway is alkaloid biosynthesis. In terms of biological role, acyltransferase involved in the biosynthesis of akuammilan monoterpene indole alkaloids (MIAs) natural products, components with various biological properties such as antidiabetic, antibacterial, anti-inflammatory, anticancer, and antimalarial activities. Catalyzes the conversion of rhazimol to akuammiline. The protein is Akuammiline synthase 2 of Alstonia scholaris (Dogbane).